A 700-amino-acid polypeptide reads, in one-letter code: Phosphoribosylformylglycinamidine synthase subunit PurL (700 aa).

His34 is a catalytic residue. Residue Tyr37 participates in ATP binding. Glu79 is a Mg(2+) binding site. Substrate-binding positions include 80–83 (SHNH) and Arg102. Catalysis depends on His81, which acts as the Proton acceptor. Position 103 (Asp103) interacts with Mg(2+). Gln227 lines the substrate pocket. Asp255 is a binding site for Mg(2+). Substrate is bound at residue 299–301 (ESQ). Residues Asp476 and Gly513 each coordinate ATP. A Mg(2+)-binding site is contributed by Asn514. Ser516 serves as a coordination point for substrate.

This sequence belongs to the FGAMS family. As to quaternary structure, monomer. Part of the FGAM synthase complex composed of 1 PurL, 1 PurQ and 2 PurS subunits.

Its subcellular location is the cytoplasm. The enzyme catalyses N(2)-formyl-N(1)-(5-phospho-beta-D-ribosyl)glycinamide + L-glutamine + ATP + H2O = 2-formamido-N(1)-(5-O-phospho-beta-D-ribosyl)acetamidine + L-glutamate + ADP + phosphate + H(+). It functions in the pathway purine metabolism; IMP biosynthesis via de novo pathway; 5-amino-1-(5-phospho-D-ribosyl)imidazole from N(2)-formyl-N(1)-(5-phospho-D-ribosyl)glycinamide: step 1/2. Functionally, part of the phosphoribosylformylglycinamidine synthase complex involved in the purines biosynthetic pathway. Catalyzes the ATP-dependent conversion of formylglycinamide ribonucleotide (FGAR) and glutamine to yield formylglycinamidine ribonucleotide (FGAM) and glutamate. The FGAM synthase complex is composed of three subunits. PurQ produces an ammonia molecule by converting glutamine to glutamate. PurL transfers the ammonia molecule to FGAR to form FGAM in an ATP-dependent manner. PurS interacts with PurQ and PurL and is thought to assist in the transfer of the ammonia molecule from PurQ to PurL. In Halobacterium salinarum (strain ATCC 29341 / DSM 671 / R1), this protein is Phosphoribosylformylglycinamidine synthase subunit PurL.